Here is a 404-residue protein sequence, read N- to C-terminus: Cysteine desulfurase IscS (404 aa).

Pyridoxal 5'-phosphate is bound by residues 75–76, asparagine 155, glutamine 183, and 203–205; these read AT and SSH. Lysine 206 is subject to N6-(pyridoxal phosphate)lysine. Residue threonine 243 coordinates pyridoxal 5'-phosphate. Cysteine 328 functions as the Cysteine persulfide intermediate in the catalytic mechanism. [2Fe-2S] cluster is bound at residue cysteine 328.

Belongs to the class-V pyridoxal-phosphate-dependent aminotransferase family. NifS/IscS subfamily. In terms of assembly, homodimer. Forms a heterotetramer with IscU, interacts with other sulfur acceptors. Requires pyridoxal 5'-phosphate as cofactor.

The protein resides in the cytoplasm. It catalyses the reaction (sulfur carrier)-H + L-cysteine = (sulfur carrier)-SH + L-alanine. Its pathway is cofactor biosynthesis; iron-sulfur cluster biosynthesis. In terms of biological role, master enzyme that delivers sulfur to a number of partners involved in Fe-S cluster assembly, tRNA modification or cofactor biosynthesis. Catalyzes the removal of elemental sulfur atoms from cysteine to produce alanine. Functions as a sulfur delivery protein for Fe-S cluster synthesis onto IscU, an Fe-S scaffold assembly protein, as well as other S acceptor proteins. This Haemophilus influenzae (strain PittEE) protein is Cysteine desulfurase IscS.